A 675-amino-acid chain; its full sequence is NADH-ubiquinone oxidoreductase 75 kDa subunit (675 aa).

A 2Fe-2S ferredoxin-type domain is found at 2-80 (KNISFKVNDF…SMNIYTNTLK (79 aa)). The [2Fe-2S] cluster site is built by cysteine 36, cysteine 47, cysteine 50, and cysteine 64. Residues 80 to 119 (KVKKARESVLEFLLANHPLDCPICDQGGECDLQDQSVVFG) form the 4Fe-4S His(Cys)3-ligated-type domain. [4Fe-4S] cluster is bound by residues histidine 96, cysteine 100, cysteine 103, cysteine 109, cysteine 148, cysteine 151, cysteine 154, and cysteine 198. The 4Fe-4S Mo/W bis-MGD-type domain occupies 217–273 (LKSYNSIDVLDSLHSNIRVDIRGTKIMRILPRVNSELNEDWITDKIRFSYDSFRRQR).

Belongs to the complex I 75 kDa subunit family. In terms of assembly, complex I is composed of about 30 different subunits. It depends on [2Fe-2S] cluster as a cofactor. Requires [4Fe-4S] cluster as cofactor.

It localises to the mitochondrion inner membrane. The enzyme catalyses a ubiquinone + NADH + 5 H(+)(in) = a ubiquinol + NAD(+) + 4 H(+)(out). Functionally, core subunit of the mitochondrial membrane respiratory chain NADH dehydrogenase (Complex I) that is believed to belong to the minimal assembly required for catalysis. Complex I functions in the transfer of electrons from NADH to the respiratory chain. The immediate electron acceptor for the enzyme is believed to be ubiquinone. This is the largest subunit of complex I and it is a component of the iron-sulfur (IP) fragment of the enzyme. It may form part of the active site crevice where NADH is oxidized. In Acanthamoeba castellanii (Amoeba), this protein is NADH-ubiquinone oxidoreductase 75 kDa subunit (NAD11).